A 120-amino-acid polypeptide reads, in one-letter code: Large ribosomal subunit protein uL18 (120 aa).

The protein belongs to the universal ribosomal protein uL18 family. As to quaternary structure, part of the 50S ribosomal subunit; part of the 5S rRNA/L5/L18/L25 subcomplex. Contacts the 5S and 23S rRNAs.

This is one of the proteins that bind and probably mediate the attachment of the 5S RNA into the large ribosomal subunit, where it forms part of the central protuberance. The chain is Large ribosomal subunit protein uL18 from Acidiphilium cryptum (strain JF-5).